A 429-amino-acid chain; its full sequence is Ribosomal RNA small subunit methyltransferase B (429 aa).

Residues 254–260 (CAGPGGK), aspartate 277, aspartate 303, and aspartate 322 contribute to the S-adenosyl-L-methionine site. Cysteine 375 functions as the Nucleophile in the catalytic mechanism.

This sequence belongs to the class I-like SAM-binding methyltransferase superfamily. RsmB/NOP family.

The protein localises to the cytoplasm. The enzyme catalyses cytidine(967) in 16S rRNA + S-adenosyl-L-methionine = 5-methylcytidine(967) in 16S rRNA + S-adenosyl-L-homocysteine + H(+). Functionally, specifically methylates the cytosine at position 967 (m5C967) of 16S rRNA. The polypeptide is Ribosomal RNA small subunit methyltransferase B (Escherichia coli O6:K15:H31 (strain 536 / UPEC)).